A 498-amino-acid polypeptide reads, in one-letter code: Cytochrome P450 71D15 (498 aa).

A helical; Signal-anchor for type II membrane protein transmembrane segment spans residues 3–23 (LLQLWSALIILVVTYTISLLI). Cysteine 437 is a binding site for heme.

It belongs to the cytochrome P450 family. Requires heme as cofactor.

Its subcellular location is the endoplasmic reticulum membrane. It carries out the reaction (4S)-limonene + reduced [NADPH--hemoprotein reductase] + O2 = (1S,6R)-isopiperitenol + oxidized [NADPH--hemoprotein reductase] + H2O + H(+). Hydroxylates (-)-(4S)-limonene to (-)-trans-isopiperitenol, a precursor of (-)-menthol, responsible for the cooling sensation of peppermint. Fluorinated substrate analogs are hydroxylated with the same regio- and stereochemistry. In Mentha piperita (Peppermint), this protein is Cytochrome P450 71D15 (CYP71D15).